A 318-amino-acid polypeptide reads, in one-letter code: NADH-ubiquinone oxidoreductase chain 1 (318 aa).

8 helical membrane passes run 2–22 (FMINVLSLIIPILLAVAFLTL), 69–89 (LMFIMAPILALTLALTMWIPL), 100–120 (LGVLFMLAMSSLAVYSILWSG), 146–166 (LAIILLSVLLMNGSFTLAMLI), 171–191 (YMWLIIPAWPLAMMWFISTLA), 223–243 (FFLAEYANIIMMNILTTILFF), 253–273 (ELYTINFTVKTLLLTTTFLWI), and 294–314 (LPLTLALCMWHVSLPIITASI).

This sequence belongs to the complex I subunit 1 family. Core subunit of respiratory chain NADH dehydrogenase (Complex I) which is composed of 45 different subunits.

Its subcellular location is the mitochondrion inner membrane. The enzyme catalyses a ubiquinone + NADH + 5 H(+)(in) = a ubiquinol + NAD(+) + 4 H(+)(out). Core subunit of the mitochondrial membrane respiratory chain NADH dehydrogenase (Complex I) which catalyzes electron transfer from NADH through the respiratory chain, using ubiquinone as an electron acceptor. Essential for the catalytic activity and assembly of complex I. The chain is NADH-ubiquinone oxidoreductase chain 1 (MT-ND1) from Felis catus (Cat).